The following is a 602-amino-acid chain: Translation factor GUF1 homolog, organellar chromatophore (602 aa).

Positions 7-189 constitute a tr-type G domain; the sequence is SRIRNFCIIA…AIVERIPPPV (183 aa). GTP contacts are provided by residues 16 to 23, 82 to 86, and 136 to 139; these read AHIDHGKS, DTPGH, and NKID.

It belongs to the TRAFAC class translation factor GTPase superfamily. Classic translation factor GTPase family. LepA subfamily.

It is found in the plastid. The protein resides in the organellar chromatophore. It carries out the reaction GTP + H2O = GDP + phosphate + H(+). Promotes protein synthesis. May act as a fidelity factor of the translation reaction, by catalyzing a one-codon backward translocation of tRNAs on improperly translocated ribosomes. This chain is Translation factor GUF1 homolog, organellar chromatophore, found in Paulinella chromatophora.